A 118-amino-acid polypeptide reads, in one-letter code: Large ribosomal subunit protein uL22 (118 aa).

It belongs to the universal ribosomal protein uL22 family. In terms of assembly, part of the 50S ribosomal subunit.

In terms of biological role, this protein binds specifically to 23S rRNA; its binding is stimulated by other ribosomal proteins, e.g. L4, L17, and L20. It is important during the early stages of 50S assembly. It makes multiple contacts with different domains of the 23S rRNA in the assembled 50S subunit and ribosome. Its function is as follows. The globular domain of the protein is located near the polypeptide exit tunnel on the outside of the subunit, while an extended beta-hairpin is found that lines the wall of the exit tunnel in the center of the 70S ribosome. The chain is Large ribosomal subunit protein uL22 from Levilactobacillus brevis (strain ATCC 367 / BCRC 12310 / CIP 105137 / JCM 1170 / LMG 11437 / NCIMB 947 / NCTC 947) (Lactobacillus brevis).